Here is a 548-residue protein sequence, read N- to C-terminus: Chaperonin GroEL (548 aa).

ATP is bound by residues 30 to 33 (TLGP), Lys51, 87 to 91 (DGTTT), Gly415, 479 to 481 (NAA), and Asp495.

It belongs to the chaperonin (HSP60) family. In terms of assembly, forms a cylinder of 14 subunits composed of two heptameric rings stacked back-to-back. Interacts with the co-chaperonin GroES.

The protein resides in the cytoplasm. The enzyme catalyses ATP + H2O + a folded polypeptide = ADP + phosphate + an unfolded polypeptide.. Its function is as follows. Together with its co-chaperonin GroES, plays an essential role in assisting protein folding. The GroEL-GroES system forms a nano-cage that allows encapsulation of the non-native substrate proteins and provides a physical environment optimized to promote and accelerate protein folding. This is Chaperonin GroEL from Proteus mirabilis (strain HI4320).